A 355-amino-acid chain; its full sequence is Serum paraoxonase/arylesterase 1 (355 aa).

C42 and C353 are oxidised to a cystine. Ca(2+) contacts are provided by E53 and D54. Residue H115 is the Proton acceptor of the active site. The Ca(2+) site is built by I117, N168, D169, and N224. N-linked (GlcNAc...) asparagine glycosylation occurs at N253. 2 residues coordinate Ca(2+): D269 and N270. Residues N270 and N324 are each glycosylated (N-linked (GlcNAc...) asparagine).

Belongs to the paraoxonase family. In terms of assembly, homodimer. Interacts with CLU. The cofactor is Ca(2+). The signal sequence is not cleaved. As to expression, plasma, liver, kidney, heart, brain, small intestine and lung. In the plasma, associated with HDL.

The protein resides in the secreted. The protein localises to the extracellular space. It catalyses the reaction a phenyl acetate + H2O = a phenol + acetate + H(+). The enzyme catalyses An aryl dialkyl phosphate + H2O = dialkyl phosphate + an aryl alcohol.. It carries out the reaction an N-acyl-L-homoserine lactone + H2O = an N-acyl-L-homoserine + H(+). Hydrolyzes the toxic metabolites of a variety of organophosphorus insecticides. Capable of hydrolyzing a broad spectrum of organophosphate substrates and lactones, and a number of aromatic carboxylic acid esters. Mediates an enzymatic protection of low density lipoproteins against oxidative modification. In Mus musculus (Mouse), this protein is Serum paraoxonase/arylesterase 1 (Pon1).